A 156-amino-acid polypeptide reads, in one-letter code: Small ribosomal subunit protein uS7 (156 aa).

Belongs to the universal ribosomal protein uS7 family. Part of the 30S ribosomal subunit. Contacts proteins S9 and S11.

Its function is as follows. One of the primary rRNA binding proteins, it binds directly to 16S rRNA where it nucleates assembly of the head domain of the 30S subunit. Is located at the subunit interface close to the decoding center, probably blocks exit of the E-site tRNA. The polypeptide is Small ribosomal subunit protein uS7 (Novosphingobium aromaticivorans (strain ATCC 700278 / DSM 12444 / CCUG 56034 / CIP 105152 / NBRC 16084 / F199)).